The sequence spans 269 residues: Shikimate dehydrogenase (NADP(+)) (269 aa).

Shikimate contacts are provided by residues 15–17 (SLS) and T62. Residue K66 is the Proton acceptor of the active site. Residues N86 and D99 each coordinate shikimate. NADP(+)-binding positions include 123-127 (GAGGA), 146-151 (NRTTAK), and L213. Y215 serves as a coordination point for shikimate. G236 contributes to the NADP(+) binding site.

It belongs to the shikimate dehydrogenase family. Homodimer.

The catalysed reaction is shikimate + NADP(+) = 3-dehydroshikimate + NADPH + H(+). Its pathway is metabolic intermediate biosynthesis; chorismate biosynthesis; chorismate from D-erythrose 4-phosphate and phosphoenolpyruvate: step 4/7. In terms of biological role, involved in the biosynthesis of the chorismate, which leads to the biosynthesis of aromatic amino acids. Catalyzes the reversible NADPH linked reduction of 3-dehydroshikimate (DHSA) to yield shikimate (SA). This Methanocella arvoryzae (strain DSM 22066 / NBRC 105507 / MRE50) protein is Shikimate dehydrogenase (NADP(+)).